The chain runs to 569 residues: Linoleate hydratase (569 aa).

Tyr87 contributes to the FAD binding site. Residue Tyr205 is the Proton donor of the active site. 3 residues coordinate FAD: Val254, Ser300, and Thr524.

Belongs to the oleate hydratase family. FAD is required as a cofactor.

It is found in the cell membrane. The protein resides in the cytoplasm. The enzyme catalyses (9Z,12Z)-octadecadienoate + H2O = (10S)-hydroxy-(12Z)-octadecenoate. It carries out the reaction (10E,12Z)-octadecadienoate + H2O = (10S)-hydroxy-(12Z)-octadecenoate. It catalyses the reaction (9Z)-octadecenoate + H2O = 10-hydroxyoctadecanoate. The catalysed reaction is (10E)-octadecenoate + H2O = 10-hydroxyoctadecanoate. The enzyme catalyses (9E,11E)-octadecadienoate + H2O = 10-hydroxy-(11E)-octadecenoate. It carries out the reaction (9Z,11E)-octadecadienoate + H2O = 10-hydroxy-(11E)-octadecenoate. It catalyses the reaction (9Z)-hexadecenoate + H2O = 10-hydroxyhexadecanoate. The catalysed reaction is (9Z,12Z,15Z)-octadecatrienoate + H2O = (10S)-hydroxy-(12Z,15Z)-octadecadienoate. The enzyme catalyses (6Z,9Z,12Z)-octadecatrienoate + H2O = (10S)-hydroxy-(6Z,12Z)-octadecadienoate. It carries out the reaction (6Z,9Z,12Z,15Z)-octadecatetraenoate + H2O = (10S)-hydroxy-(6Z,12Z,15Z)-octadecatrienoate. Its pathway is lipid metabolism; fatty acid metabolism. Its activity is regulated as follows. The addition of NADH or NADPH highly increases catalytic activity, likely by reducing the cofactor FAD to FADH2. The hydration and dehydration reactions are strongly inhibited by Ag(+), Fe(2+), Cu(2+), Zn(2+), Hg(2+), and Fe(3+). In terms of biological role, is involved in a saturation metabolic pathway of polyunsaturated fatty acids, that detoxifies unsaturated fatty acids and generates hydroxy fatty acids, oxo fatty acids, conjugated fatty acids such as conjugated linoleic acids (CLAs), and partially saturated trans-fatty acids as intermediates. CLA-HY catalyzes the hydration and dehydration steps in the production of 10-hydroxy-cis-12-octadecenoate, trans-10,cis-12-CLA, cis-9,trans-11-CLA, trans-9,trans-11-CLA, oleate and trans-10-octadecenoate during linoleate metabolism. Is also able to hydrate palmitoleic acid (cis-9-hexadecenoic acid), oleic acid, alpha-linolenic acid, gamma-linolenic acid, and stearidonic acid into the corresponding 10-hydroxy fatty acids, and dehydrate 10-hydroxy-cis-12,cis-15-octadecadienoic acid, 10-hydroxy-cis-6,cis-12-octadecadienoic acid, and 10-hydroxyoctadecanoic acid into the corresponding fatty acids with cis double bonds at the Delta9 position. As part of the gut microbiome, this enzyme modifies host fatty acid composition and is expected to improve human health by altering lipid metabolism related to the onset of metabolic syndrome. Shows regioselectivity for Delta9 double bond hydration, generating C10 hydroxy groups in the (S)-configuration with high enantioselectivity, when another double bond is in position 12. Is not able to hydrate fatty acids with a trans carbon-carbon double bond at Delta9 position (elaidic acid, trans-9-octadecenoic acid), fatty acid esters (methyl linoleate, monolinolein, dilinolein, and trilinolein), and conjugated fatty acids (conjugated linoleic acids), as well as fatty acids with other chain lengths, such as myristoleic acid (cis-9-tetradecenoic acid), arachidonic acid (cis-5,cis-8,cis-11,cis-14-eicosatetraenoic acid), EPA (cis-5,cis-8,cis-11,cis-14,cis-17-eicosapentaenoic acid), DHA (cis-4,cis-7,cis-10,cis-13,cis-16,cis-19-docosahexaenoic acid) and fatty acids with a cis carbon-carbon double bond at Delta11 position, such as cis-vaccenic acid and cis-11-octadecenoic acid, or fatty alcohols, such as linoleyl alcohol. Is not able to dehydrate 12-hydroxy, 3-hydroxy, and 9-hydroxy fatty acids. This chain is Linoleate hydratase, found in Lactiplantibacillus plantarum (Lactobacillus plantarum).